Here is a 361-residue protein sequence, read N- to C-terminus: Peptide chain release factor 1 (361 aa).

Position 236 is an N5-methylglutamine (Q236). The segment covering 285 to 309 (NAKDSARAADRKAQVGSGDRSERIR) has biased composition (basic and acidic residues). The segment at 285–312 (NAKDSARAADRKAQVGSGDRSERIRTYN) is disordered.

This sequence belongs to the prokaryotic/mitochondrial release factor family. Methylated by PrmC. Methylation increases the termination efficiency of RF1.

It is found in the cytoplasm. In terms of biological role, peptide chain release factor 1 directs the termination of translation in response to the peptide chain termination codons UAG and UAA. The chain is Peptide chain release factor 1 from Methylobacterium radiotolerans (strain ATCC 27329 / DSM 1819 / JCM 2831 / NBRC 15690 / NCIMB 10815 / 0-1).